Here is a 266-residue protein sequence, read N- to C-terminus: Aspartate/glutamate leucyltransferase (266 aa).

It belongs to the R-transferase family. Bpt subfamily.

It localises to the cytoplasm. The enzyme catalyses N-terminal L-glutamyl-[protein] + L-leucyl-tRNA(Leu) = N-terminal L-leucyl-L-glutamyl-[protein] + tRNA(Leu) + H(+). The catalysed reaction is N-terminal L-aspartyl-[protein] + L-leucyl-tRNA(Leu) = N-terminal L-leucyl-L-aspartyl-[protein] + tRNA(Leu) + H(+). Its function is as follows. Functions in the N-end rule pathway of protein degradation where it conjugates Leu from its aminoacyl-tRNA to the N-termini of proteins containing an N-terminal aspartate or glutamate. This Rhizorhabdus wittichii (strain DSM 6014 / CCUG 31198 / JCM 15750 / NBRC 105917 / EY 4224 / RW1) (Sphingomonas wittichii) protein is Aspartate/glutamate leucyltransferase.